Here is a 561-residue protein sequence, read N- to C-terminus: Potassium-transporting ATPase potassium-binding subunit (561 aa).

12 consecutive transmembrane segments (helical) span residues 5–25 (LAAGLQVVFVLAVLAVAYVPV), 60–80 (YGYAGSVLGFSAASVLFLYAL), 86–106 (VLPLSGDLSGVSPAVAFNTAV), 131–151 (GLAVQNFVSAAVGMAVAVALI), 177–197 (ILLPFSFVIALILLSQGVIQS), 247–267 (PTPVSNIVEILAILLIPVSLT), 281–301 (LTLLAVMGILWGSLLAVTLAA), 324–344 (FGIPGTALFAVSTTGTSTGAV), 376–396 (GLYGILVLALIAVFVGGLLVG), 415–435 (ALSVLVMPALVLIGTGITVIL), 488–508 (ALGLCMLFGRFLPIIFVLALA), and 537–557 (GTVVLVAALTFFPALALGPIA).

Belongs to the KdpA family. As to quaternary structure, the system is composed of three essential subunits: KdpA, KdpB and KdpC.

Its subcellular location is the cell membrane. Functionally, part of the high-affinity ATP-driven potassium transport (or Kdp) system, which catalyzes the hydrolysis of ATP coupled with the electrogenic transport of potassium into the cytoplasm. This subunit binds the extracellular potassium ions and delivers the ions to the membrane domain of KdpB through an intramembrane tunnel. The chain is Potassium-transporting ATPase potassium-binding subunit from Rhodococcus opacus (strain B4).